The chain runs to 246 residues: TLC domain-containing protein 2 (246 aa).

6 consecutive transmembrane segments (helical) span residues 5 to 25 (SVIL…YGLG), 43 to 63 (ISTS…CFCM), 79 to 99 (SHAL…DMVI), 107 to 127 (WELL…VLTC), 128 to 148 (RYVG…FLHL), and 199 to 219 (FSYT…IVLF). Positions 35 to 231 (RNAWKWNNIS…LMRSDFMKAS (197 aa)) constitute a TLC domain.

The protein belongs to the TLCD family.

Its subcellular location is the cell membrane. Functionally, regulates the composition and fluidity of the plasma membrane. Inhibits the incorporation of membrane-fluidizing phospholipids containing omega-3 long-chain polyunsaturated fatty acids (LCPUFA) and thereby promotes membrane rigidity. Does not appear to have any effect on LCPUFA synthesis. This chain is TLC domain-containing protein 2 (tlcd2), found in Danio rerio (Zebrafish).